A 187-amino-acid chain; its full sequence is Large ribosomal subunit protein uL5 (187 aa).

This sequence belongs to the universal ribosomal protein uL5 family. Part of the 50S ribosomal subunit; part of the 5S rRNA/L5/L18/L25 subcomplex. Contacts the 5S rRNA and the P site tRNA. Forms a bridge to the 30S subunit in the 70S ribosome.

In terms of biological role, this is one of the proteins that bind and probably mediate the attachment of the 5S RNA into the large ribosomal subunit, where it forms part of the central protuberance. In the 70S ribosome it contacts protein S13 of the 30S subunit (bridge B1b), connecting the 2 subunits; this bridge is implicated in subunit movement. Contacts the P site tRNA; the 5S rRNA and some of its associated proteins might help stabilize positioning of ribosome-bound tRNAs. The sequence is that of Large ribosomal subunit protein uL5 from Mycobacterium bovis (strain ATCC BAA-935 / AF2122/97).